The sequence spans 239 residues: Protein-S-isoprenylcysteine O-methyltransferase (239 aa).

Residues Met-1 to Val-23 lie on the Cytoplasmic side of the membrane. Residues Thr-24–Ile-44 traverse the membrane as a helical segment. Topologically, residues Arg-45 to Lys-47 are lumenal. A helical transmembrane segment spans residues Asn-48–Ala-68. Residues Lys-69 to Tyr-88 are Cytoplasmic-facing. A helical transmembrane segment spans residues Met-89–Leu-109. Residue Lys-110 is a topological domain, lumenal. Residues Ile-111–Leu-131 form a helical membrane-spanning segment. Topologically, residues Gly-132–Tyr-175 are cytoplasmic. S-adenosyl-L-methionine is bound by residues His-159–Val-162, Tyr-167, and His-172–Tyr-175. Positions Leu-176 to Phe-206 form an intramembrane region, helical. Over Ser-207–Ile-239 the chain is Cytoplasmic. Arg-209 contacts substrate. Glu-213 contacts S-adenosyl-L-methionine.

The protein belongs to the class VI-like SAM-binding methyltransferase superfamily. Isoprenylcysteine carboxyl methyltransferase family.

The protein localises to the endoplasmic reticulum membrane. It carries out the reaction [protein]-C-terminal S-[(2E,6E)-farnesyl]-L-cysteine + S-adenosyl-L-methionine = [protein]-C-terminal S-[(2E,6E)-farnesyl]-L-cysteine methyl ester + S-adenosyl-L-homocysteine. Mediates C-terminal methylation of the isoprenylated C-terminal cysteine in A-factor mating pheromone and Ras proteins. Does not have a preference for the farnesyl or geranylgeranyl moieties in the model substrates N-acetyl-S-farnesyl-L-cysteine (AFC) and N-acetyl-S-geranylgeranyl-L-cysteine (AGGC) in vitro. In Saccharomyces cerevisiae (strain ATCC 204508 / S288c) (Baker's yeast), this protein is Protein-S-isoprenylcysteine O-methyltransferase (STE14).